The following is a 777-amino-acid chain: Proton-coupled zinc antiporter SLC30A5 (777 aa).

The Cytoplasmic segment spans residues 1 to 28 (MEEKYSSNVMSSGRLGPVDAPESRLTRY). A helical membrane pass occupies residues 29–49 (IVLLCFTKFLKALGIFESYDL). Over 50-52 (LKV) the chain is Lumenal. Residues 53-73 (VHIVQFIFILKLGSTCFMVLF) form a helical membrane-spanning segment. Over 74 to 94 (QKPFSSGKSITKRQWVSIVKH) the chain is Cytoplasmic. A helical transmembrane segment spans residues 95-115 (AFVSCIISLLWFFGLTLCGPL). The Lumenal segment spans residues 116–117 (RT). Residues 118-138 (LLLFEHSDIVVISLLTVLFTG) traverse the membrane as a helical segment. Over 139-148 (SGGGPSKTRG) the chain is Cytoplasmic. Residues 149-169 (AAFFIIAVICLLLFDNDDLMA) traverse the membrane as a helical segment. Topologically, residues 170-189 (KIAEHPEGHHDSALTHFLYR) are lumenal. The helical transmembrane segment at 190–210 (AFFLLGVADHKGGVLLLVLAL) threads the bilayer. Residues 211–234 (CFNVGFHTASRKLSLDIGGAKRLQ) are Cytoplasmic-facing. The chain crosses the membrane as a helical span at residues 235 to 255 (ALSHLVSVIILSPWVIILSAT). The Lumenal segment spans residues 256 to 263 (TESKIESW). A helical transmembrane segment spans residues 264 to 284 (SALIMPFMTVIFSVMIMDFYV). The Cytoplasmic segment spans residues 285–299 (ESVCSVKMEPSKCAR). Residues 300–320 (YGSFLIFASALLLGNFWTHPI) form a helical membrane-spanning segment. The Lumenal segment spans residues 321–338 (TDQLRAMNKPAHQLHTEH). The chain crosses the membrane as a helical span at residues 339-359 (VLSGGVVVSAIFFILSAQILA). Residues 360–414 (SSSRKGQRGTLVGYSPEGTPLYNFMGDALHNTSPSMPRFLKDSLKQILEEYDSRQ) are Cytoplasmic-facing. Residues 415 to 435 (IFYFLCLNLAFTFVEIFYGVW) form a helical membrane-spanning segment. Topologically, residues 436-444 (TNSLGLLSD) are lumenal. A helical membrane pass occupies residues 445-465 (GFHMLFDCSALVMGLIAALMT). Positions 447 and 451 each coordinate Zn(2+). Residues 466 to 484 (RWKATRIFSYGYGRVEILS) are Cytoplasmic-facing. The chain crosses the membrane as a helical span at residues 485–505 (GFINGLFLVVIAFFVFIEAVA). At 506–516 (RIYDPPDINTD) the chain is on the lumenal side. A helical transmembrane segment spans residues 517–537 (MLTPVSVGGLIVNLVGICAFS). A his-rich loop; required for zinc transport region spans residues 538 to 586 (HAHSHGAARGGCPSHDHGHSHHGHGHSHGHNHGHSHSDHGHNHGHTHNH). At 538-604 (HAHSHGAARG…VGMNANMRGV (67 aa)) the chain is on the cytoplasmic side. Positions 547–593 (GGCPSHDHGHSHHGHGHSHGHNHGHSHSDHGHNHGHTHNHGHSHGSA) are disordered. Composition is skewed to basic residues over residues 555-571 (GHSHHGHGHSHGHNHGH) and 579-589 (NHGHTHNHGHS). The helical transmembrane segment at 605 to 625 (FSHVLADTLGSVGVIVSTILI) threads the bilayer. 2 residues coordinate Zn(2+): His607 and Asp611. The Lumenal segment spans residues 626 to 629 (RQFG). Residues 630 to 650 (WLIADPLCSLFIAVLIFGSVL) traverse the membrane as a helical segment. Topologically, residues 651 to 777 (PLLKDACQVI…KYYKDGTYIM (127 aa)) are cytoplasmic.

The protein belongs to the cation diffusion facilitator (CDF) transporter (TC 2.A.4) family. SLC30A subfamily. As to quaternary structure, heterodimer with SLC30A6/ZNT6; form a functional zinc ion transmembrane transporter.

It localises to the golgi apparatus. The protein localises to the golgi stack membrane. The protein resides in the cytoplasmic vesicle. Its subcellular location is the COPII-coated vesicle membrane. It is found in the secretory vesicle membrane. It localises to the trans-Golgi network membrane. It catalyses the reaction Zn(2+)(in) + 2 H(+)(out) = Zn(2+)(out) + 2 H(+)(in). Functionally, together with SLC30A6 forms a functional proton-coupled zinc ion antiporter mediating zinc entry into the lumen of organelles along the secretory pathway. By contributing to zinc ion homeostasis within the early secretory pathway, regulates the activation and folding of enzymes like alkaline phosphatases and enzymes involved in phosphatidylinositol glycan anchor biosynthesis. This Xenopus tropicalis (Western clawed frog) protein is Proton-coupled zinc antiporter SLC30A5 (slc30a5).